We begin with the raw amino-acid sequence, 4499 residues long: Dynein alpha chain, flagellar outer arm (4499 aa).

The interval 1-1677 (MSIFWEVPNA…RIRICDASFP (1677 aa)) is stem. 6 Kelch repeats span residues 29–84 (RFVL…ALDD), 86–135 (RLLV…RFGS), 137–183 (VFIF…RFDH), 199–245 (KLLI…VCDG), 253–304 (KVFS…FDVK), and 307–358 (SLLI…IRGL). The Filamin repeat unit spans residues 425 to 534 (FANTAARNCI…IRGSPFTVKC (110 aa)). Kelch repeat units follow at residues 562-608 (ELVL…VLSD) and 610-661 (ELVV…AVSA). The interval 653 to 720 (PKGAAAVSAE…SRPVSAKPAP (68 aa)) is disordered. Residues 655-689 (GAAAVSAEPSAEPAAEPAAEPAAEPDADAPAAEPA) show a composition bias toward low complexity. Positions 690-705 (AEGEEGAVPAEGEEGA) are enriched in acidic residues. Kelch repeat units follow at residues 750–801 (LYVM…ATGN) and 864–913 (KLFL…TLSG). Coiled coils occupy residues 1261-1334 (ELHK…MIAN) and 1382-1450 (KKEL…RRAF). AAA regions lie at residues 1678–1921 (YGYE…VLVV) and 1981–2225 (DVIV…KSYS). ATP-binding positions include 1716–1723 (GPAGTGKT) and 2019–2026 (GPTGTGRT). Residues 2269–2317 (MIWAFGGGLVEKDGIPYRRNFDKWFKQTWTTVKIPGKGTVYDYFVNPKT) form a Kelch 11 repeat. 2 AAA regions span residues 2331-2577 (DYDG…VFQG) and 2679-2928 (EYNE…ERRY). Residue 2369–2376 (GGAGVGKT) coordinates ATP. Positions 2655–2688 (LADKAYDEVADYTSLYKTLTEALNEYNETNAAMD) form a coiled coil. 2717–2724 (GVGGSGKQ) lines the ATP pocket. A coiled-coil region spans residues 3003–3023 (VGVEKEKVNAENAAAQVEAEK). Residues 3003–3262 (VGVEKEKVNA…ERWALTVEQL (260 aa)) form a stalk region. One copy of the Kelch 12 repeat lies at 3070 to 3117 (LKKPPPGVDDITAVVIILLENNPKDKSWQAAQKLMNNVDKFLERVKSF). Coiled-coil stretches lie at residues 3170-3262 (DVVQ…VEQL) and 3486-3515 (NKER…ELED). Positions 3320 to 3550 (LVDDALVAGW…AKRVSTEISE (231 aa)) are AAA 5. The segment at 3614–3687 (GRKKGKGLKK…VGDAEDEDDE (74 aa)) is disordered. Positions 3630-3653 (QPMDHQSLMEKARRSSGVGDRRPS) are enriched in basic and acidic residues. An AAA 6 region spans residues 3843–4082 (LQNFCEHMMG…LTTCGDVLYN (240 aa)).

It belongs to the dynein heavy chain family. Consists of at least 3 heavy chains (alpha, beta and gamma), 2 intermediate chains and 8 light chains.

The protein resides in the cell projection. The protein localises to the cilium. It localises to the flagellum. Its subcellular location is the cytoplasm. It is found in the cytoskeleton. The protein resides in the flagellum axoneme. Force generating protein of eukaryotic cilia and flagella. Produces force towards the minus ends of microtubules. Dynein has ATPase activity; the force-producing power stroke is thought to occur on release of ADP. The chain is Dynein alpha chain, flagellar outer arm (ODA11) from Chlamydomonas reinhardtii (Chlamydomonas smithii).